The following is a 155-amino-acid chain: Phytohormone-binding protein CSBP (155 aa).

Residues leucine 22, glutamine 67, glutamate 69, and 139-142 contribute to the trans-zeatin site; that span reads TLMY. Glutamine 67 contacts gibberellin A3. Residue threonine 139 coordinates gibberellin A3.

Belongs to the BetVI family. As to quaternary structure, monomer.

Functionally, binds the cytokinin trans-zeatin in vitro. Binds gibberellin A3 (GA3) in vitro. The chain is Phytohormone-binding protein CSBP from Vigna radiata var. radiata (Mung bean).